A 691-amino-acid chain; its full sequence is Threonine--tRNA ligase (691 aa).

The segment at 1–22 (MSVPAQPAPGADGGDPRQPIRV) is disordered. The region spanning 1-73 (MSVPAQPAPG…DADAEVTPIA (73 aa)) is the TGS domain. The interval 268–574 (DHRKLGVELD…LTEHYAGAFP (307 aa)) is catalytic. The Zn(2+) site is built by C373, H424, and H551.

Belongs to the class-II aminoacyl-tRNA synthetase family. In terms of assembly, homodimer. Requires Zn(2+) as cofactor.

The protein resides in the cytoplasm. The catalysed reaction is tRNA(Thr) + L-threonine + ATP = L-threonyl-tRNA(Thr) + AMP + diphosphate + H(+). Its function is as follows. Catalyzes the attachment of threonine to tRNA(Thr) in a two-step reaction: L-threonine is first activated by ATP to form Thr-AMP and then transferred to the acceptor end of tRNA(Thr). Also edits incorrectly charged L-seryl-tRNA(Thr). This Mycobacterium ulcerans (strain Agy99) protein is Threonine--tRNA ligase.